A 2381-amino-acid chain; its full sequence is MKTKAHNEDEDEEIDIMNNSDGDSDDDQPSKSSSKVSQSSSKNKRKTSSSKSTNSTIEESIPQTIPAPLSTTITPPTLTMNTSNNFETEEQRKYRLQSESLAQDTASLFDEIQDELDDGFRSLLSGIDITTLPNYSIDNTNNRSIIASSSGTVNNSNNNNNNDGGISEERKRLTASAPTIPTTTLPASLPVNLSSSTSSTNILSGTASPKKRKSKDENTTINEQENVNNINSGNVKNSKNNSGSSISSSISSSSSSGSSSSKSKKSKKSKNEENSEGFVIAEDENDHKSSSNKSNSKKSSSNKSKSPSNKNNNKKLPQSRSIINSKKSTESEYDSSDSSDMDLDVNISDCDSDIEFPSFTSQTTKPNNSNSNNNNNNNSINSTIPASNNINSANNSKTTNKNITSNKKDNKVIYNDDGSDSETPILTSVKIQREQQIPQQQQQQQQQQHPQQHPQQQQTQNNNNNNNNNNNNNNNNNNNNNNNNNININNNNNNNQAFSSLISSHTAHIYPEPHFHSLSFLAPFSPLGLPIASPMSPGLLDLVSLPNSCSVPPLSPLSPLSPLLSPVSPSFNANNKHNNNSLTNKNIDATMITSIAPIMDKTSTITITPISTTDDVSNNISIISNNGNNLIANNENVTNININNNNNNNNNNNNNNNNNNNNNNNNNNNNNNNNNNNNNNNNNNNNNNNNNNGDEMSIEFSTITSGITGSGEAGSNNSNINSGVINTSTSISTPTIIPTPTPTTTIATTTTTTTESINQPSIFSNHISVFSNLLPTVIPSANIELDDIMNIQSSSSLSINSPISSQSSQSIIFSPISSGSNVISNNSINNNNNNAKKSKRFSMNPNVQKHFQPTIWHEEEKLLFRELFCAYGRDWQMVSTLMCGTKSPTQIKNFYYDVRVTLLAPFFGVSGDGETKSRIMLPEMEKDIIISKPEQNVNSNNNNNGGGNSLKDGSNGKRFQSSLSSSNGNVGGSGSGDDDVRVKKKSRTASKRSFRFSRIANETNRTPKNQPKPSKNKVLPETPPNVKYPVGSALFYFYTNPETCPVGKWFEVKILEWDNNAQVPVSMINQSSNSSPVNNNNSNNNNNNNNINPLENMEISFTELNNGIDSSMVDFTAGLDLDLLGSANDSMDLNTDVKIQQTITTSSTTTTTSTPVSSSSSSSSSSSSSSSSSSTTTATATTTGSAKSKKEKENVNNNNNNNLSNQETTIGTKYKAVMFNMNKTKGFWVFENELKEEMEIGQEIWEFSADPNAEEEMITISSSNSNSSSNLSSSLNNTIILLSTPTPPPMPIPVSTTTIAPPILSTTTPTQQQFQQLQPTQQLQQLPPPPPPPPKPPIDNTITVSSPVDLTIPLIENQMIVGGNGNCFVNCIMGENRPNGIQTQDLVIKLVESLYVTTDKFKIQQYLEQKLENTTAPNTKFPYYPFPSSTTTNSATSTPTSTPTSTPSTSASTLTPTSTPTSTPVPAPTSLSTPTLTSPVLETTTIIPSDNKEKDIKDGIYSISNIISSELLEIPTFSIEFISSGSLSIVSKQKCFFEAISNSFEEREIVSINFNSIFNTYQFISNINDKAFIIQLFDNILKASDISVQKIIGDKPPPATITPILPPKTEVTQTTPPSSSSSSSSSSSSSSSSSSSSTTKNNSTTIVNNTDSTKFVDVKKEQLTTVPIVKQESNSPSKTLPPSNSPSKTLPLSNSPSKTLLPSNSSIPNKSTPSPIPKPTTSSTTYPVTTSNPSSKPQTPIPTSNKSPAKSNTTTTPATTTSNTSITPTPKPLTQTTTSTSNPNNLTQPTTSNSNPNNLTQPTNTTLKPSLPNQNTTTTITTTKPMVSAPTNSTNQNTIPNATTKPPPVVNKLPANPPLKLTPPPNSKIPAILATTTASRAPAPPIPNGGLVPNLIIKPASSSSIIKQPAGNISTPSATNFKPNPTPNAKPLAGNTSIPSTTYKQPATGVSNTSTITQATTTVPGTTTTTNPNGSIPPKPSNGLAVPSKTTTTIVNGQTVVTTTPINPNLSKPKIIMINGQKLYACTCCLSKNPPGTVIPPQYISKPVSKLSTTTSTVGGKPVANNMTTTTTSSTSTTMTTPTSTNTTTNGTPQQSTKSMINNGLTPGSNYKTAAIIHPKPLSGIPGGNTLSGKSPTPLTIKPPSGLIPGKMPPSLSSSSANPISITNNTTSLSQQSNTTNTMPSTVSLSSGSTSINSNSSNSKSLRSPKSSDNDGKESKKERKEKNLDKESGKSDRETKSEKNENRKKDKNHDKDSKSDKNHDKSDKNNNDKFDSNKNDNGAIVTSPFNLLFNPDKSPIPYKLFIGKRELLLECRRLLRIQCSRISELNKQNIESGKDTTEVISKMKDLISELSSFKFLLLDIASERYKLYKKSIGIYDF.

Disordered regions lie at residues 1 to 85 (MKTK…TSNN), 148 to 167 (SSSG…GGIS), 178 to 492 (PTIP…NNNN), and 641 to 696 (NINN…GDEM). Low complexity-rich tracts occupy residues 30–41 (SKSSSKVSQSSS) and 64–79 (TIPA…PTLT). Composition is skewed to low complexity over residues 192 to 204 (NLSS…NILS), 225 to 261 (ENVN…SSSS), and 291 to 315 (SNKS…NNKK). The span at 331-343 (SEYDSSDSSDMDL) shows a compositional bias: acidic residues. The segment covering 363-405 (TTKPNNSNSNNNNNNNSINSTIPASNNINSANNSKTTNKNITS) has biased composition (low complexity). Residues 421–430 (SETPILTSVK) are compositionally biased toward polar residues. Composition is skewed to low complexity over residues 435–492 (QQIP…NNNN) and 641–692 (NINN…NNNN). The Myb-like domain occupies 856–899 (WHEEEKLLFRELFCAYGRDWQMVSTLMCGTKSPTQIKNFYYDVR). 10 disordered regions span residues 932 to 1024 (KPEQ…ETPP), 1068 to 1093 (INQS…NINP), 1145 to 1207 (TSST…SNQE), 1295 to 1339 (STTT…PPID), 1422 to 1474 (PYYP…LSTP), 1597 to 1647 (PPAT…TTIV), 1667 to 1849 (PIVK…PPPV), 1961 to 1985 (TTVP…NGLA), 2055 to 2106 (TSTV…NGLT), and 2122 to 2280 (LSGI…NKND). Residues 936 to 953 (NVNSNNNNNGGGNSLKDG) are compositionally biased toward low complexity. The span at 982-995 (VKKKSRTASKRSFR) shows a compositional bias: basic residues. The segment covering 1000-1013 (ANETNRTPKNQPKP) has biased composition (polar residues). 4 stretches are compositionally biased toward low complexity: residues 1069-1092 (NQSS…NNIN), 1145-1186 (TSST…TGSA), 1195-1205 (VNNNNNNNLSN), and 1306-1325 (TTTP…QLQQ). Positions 1326 to 1337 (LPPPPPPPPKPP) are enriched in pro residues. Over residues 1427–1474 (PSSTTTNSATSTPTSTPTSTPSTSASTLTPTSTPTSTPVPAPTSLSTP) the composition is skewed to low complexity. A compositionally biased stretch (pro residues) spans 1597 to 1606 (PPATITPILP). Residues 1618-1637 (SSSSSSSSSSSSSSSSSSSS) show a composition bias toward low complexity. 2 stretches are compositionally biased toward polar residues: residues 1638-1647 (TTKNNSTTIV) and 1671-1701 (QESN…KTLL). 2 stretches are compositionally biased toward low complexity: residues 1702–1735 (PSNS…NPSS) and 1743–1809 (TSNK…TLKP). A compositionally biased stretch (polar residues) spans 1829 to 1844 (APTNSTNQNTIPNATT). 2 stretches are compositionally biased toward low complexity: residues 1961-1970 (TTVPGTTTTT) and 2065-2097 (NNMT…QQST). A compositionally biased stretch (polar residues) spans 2129–2138 (NTLSGKSPTP). The span at 2154–2209 (PSLSSSSANPISITNNTTSLSQQSNTTNTMPSTVSLSSGSTSINSNSSNSKSLRSP) shows a compositional bias: low complexity. Positions 2210–2278 (KSSDNDGKES…NNNDKFDSNK (69 aa)) are enriched in basic and acidic residues.

This chain is Myb-like protein U (mybU), found in Dictyostelium discoideum (Social amoeba).